Consider the following 778-residue polypeptide: MNKKILETLEFDKVKALFEPHLLTEQGLEQLRQLAPTAKADKIKQAFAEMKEMQALFVEQPHFTILSTKEIAGVCKRLEMGADLNIEEFLLLKRVLLASRELQSFYANLENVSLEELAFWFEKLHDFPQLQGNLQAFNDAGFIENFASEELARIRRKIHDSESQVRDVLQDLLKQKAQMLTEGIVASRNGRQVLPVKNTYRNKIAGVVHDISASGNTVYIEPREVVKLSEEIASLRADERYEMLRILQEISERVRPHAAEIANDAWIIGHLDLIRAKVRFIQERQAVVPQLSENQEIQLLHVCHPLVKNAVANDVHFGQDLTAIVITGPNTGGKTIMLKTLGLTQVMAQSGLPILADKGSRVGIFEEIFADIGDEQSIEQSLSTFSSHMTNIVDILGKVNQHSLLLLDELGAGTDPQEGAALAMAILEDLRLRQIKTMATTHYPELKAYGIETAFVQNASMEFDTATLRPTYRFMQGVPGRSNAFEIAKRLGLSEVIVGDASQQIDQDNDVNRIIEQLEEQTLESRKRLDNIREVEQENLKMNRALKKLYNELNREKETELNKAREQAAEIVDMALSESDQILKNLHSKSQLKPHEIIEAKAKLKKLAPEKVDLSKNKVLQKAKKKRAPKVGDDIVVLSYGQRGTLTSQLKDGRWEAQVGLIKMTLEEKEFDLVQAQQEKPVKKKQVNVVKRTSGRGPQARLDLRGKRYEEAMNELDTFIDQALLNNMAQVDIIHGIGTGVIREGVTKYLQRNKHVKSFGYAPQNAGGSGATIVTFKG.

328–335 (GPNTGGKT) contacts ATP. The 76-residue stretch at 702-777 (LDLRGKRYEE…GSGATIVTFK (76 aa)) folds into the Smr domain.

This sequence belongs to the DNA mismatch repair MutS family. MutS2 subfamily. Homodimer. Binds to stalled ribosomes, contacting rRNA.

Endonuclease that is involved in the suppression of homologous recombination and thus may have a key role in the control of bacterial genetic diversity. Functionally, acts as a ribosome collision sensor, splitting the ribosome into its 2 subunits. Detects stalled/collided 70S ribosomes which it binds and splits by an ATP-hydrolysis driven conformational change. Acts upstream of the ribosome quality control system (RQC), a ribosome-associated complex that mediates the extraction of incompletely synthesized nascent chains from stalled ribosomes and their subsequent degradation. Probably generates substrates for RQC. In Streptococcus pneumoniae serotype 19F (strain G54), this protein is Endonuclease MutS2.